The sequence spans 210 residues: Syntaxin-binding protein 6 (210 aa).

Ser2 is modified (N-acetylserine). Positions Gly151–Cys210 constitute a v-SNARE coiled-coil homology domain.

As to quaternary structure, part of a ternary complex containing SNAP25 and STX1A that can be dissociated by NAPA and NSF. Interacts with STX4A. Detected at low levels in brain, and at very low levels in heart, adrenal gland, testis, liver and kidney.

The protein localises to the cytoplasm. Its subcellular location is the membrane. Forms non-fusogenic complexes with SNAP25 and STX1A and may thereby modulate the formation of functional SNARE complexes and exocytosis. This chain is Syntaxin-binding protein 6 (STXBP6), found in Homo sapiens (Human).